Here is a 168-residue protein sequence, read N- to C-terminus: Large ribosomal subunit protein uL10 (168 aa).

Belongs to the universal ribosomal protein uL10 family. In terms of assembly, part of the ribosomal stalk of the 50S ribosomal subunit. The N-terminus interacts with L11 and the large rRNA to form the base of the stalk. The C-terminus forms an elongated spine to which L12 dimers bind in a sequential fashion forming a multimeric L10(L12)X complex.

Forms part of the ribosomal stalk, playing a central role in the interaction of the ribosome with GTP-bound translation factors. The protein is Large ribosomal subunit protein uL10 (rplJ) of Buchnera aphidicola subsp. Baizongia pistaciae (strain Bp).